A 161-amino-acid chain; its full sequence is Putative 4-hydroxy-4-methyl-2-oxoglutarate aldolase (161 aa).

Residues 75 to 78 and arginine 97 each bind substrate; that span reads GDNL. Aspartate 98 contributes to the a divalent metal cation binding site.

This sequence belongs to the class II aldolase/RraA-like family. In terms of assembly, homotrimer. Requires a divalent metal cation as cofactor.

It carries out the reaction 4-hydroxy-4-methyl-2-oxoglutarate = 2 pyruvate. The catalysed reaction is oxaloacetate + H(+) = pyruvate + CO2. In terms of biological role, catalyzes the aldol cleavage of 4-hydroxy-4-methyl-2-oxoglutarate (HMG) into 2 molecules of pyruvate. Also contains a secondary oxaloacetate (OAA) decarboxylase activity due to the common pyruvate enolate transition state formed following C-C bond cleavage in the retro-aldol and decarboxylation reactions. The chain is Putative 4-hydroxy-4-methyl-2-oxoglutarate aldolase from Alkalilimnicola ehrlichii (strain ATCC BAA-1101 / DSM 17681 / MLHE-1).